We begin with the raw amino-acid sequence, 525 residues long: Probable protein kinase UbiB (525 aa).

Residues 119-501 enclose the Protein kinase domain; the sequence is RFDHHPVASA…QRRTNRLLSA (383 aa). ATP-binding positions include 125–133 and K151; that span reads VASASIAQV. D286 serves as the catalytic Proton acceptor. A helical membrane pass occupies residues 502-522; that stretch reads ALLFIGGFAVGIIATHVLAWL.

The protein belongs to the ABC1 family. UbiB subfamily.

The protein localises to the cell inner membrane. The protein operates within cofactor biosynthesis; ubiquinone biosynthesis [regulation]. Functionally, is probably a protein kinase regulator of UbiI activity which is involved in aerobic coenzyme Q (ubiquinone) biosynthesis. This is Probable protein kinase UbiB from Ralstonia nicotianae (strain ATCC BAA-1114 / GMI1000) (Ralstonia solanacearum).